The chain runs to 208 residues: MRLILLGPPGAGKGTQAQRLVHHHGIVQLSTGEMLRAAVAAGTPVGLKAKDVMASGGLVPDDVVIGIISDRLDQSDAKNGFILDGFPRTVPQAEALDRLLKSKNLKLDAVVELCVNESALLQRVESRVAEMTARGEQVRADDTPEVLSKRLASYRALTEPLIHYYSERGKLLTVDGMMPIEQVTRDIYRVLEEAIGASDVQSRGKGAG.

Gly10 to Thr15 lines the ATP pocket. The segment at Ser30 to Val59 is NMP. AMP contacts are provided by residues Thr31, Arg36, Gly57–Val59, Gly85–Arg88, and Gln92. Residues Ser126–Asp142 are LID. Residue Arg127 coordinates ATP. The AMP site is built by Arg139 and Arg150. Met178 is a binding site for ATP.

The protein belongs to the adenylate kinase family. In terms of assembly, monomer.

It localises to the cytoplasm. The catalysed reaction is AMP + ATP = 2 ADP. It functions in the pathway purine metabolism; AMP biosynthesis via salvage pathway; AMP from ADP: step 1/1. Functionally, catalyzes the reversible transfer of the terminal phosphate group between ATP and AMP. Plays an important role in cellular energy homeostasis and in adenine nucleotide metabolism. The sequence is that of Adenylate kinase from Nitrobacter hamburgensis (strain DSM 10229 / NCIMB 13809 / X14).